A 179-amino-acid polypeptide reads, in one-letter code: Large ribosomal subunit protein bL17 (179 aa).

The interval 127–179 (TDTLPDTVIDTGPDSAPDPVPGSEPGSAAGDLPDADTAPADPGESSSNQRVIR) is disordered. Positions 154 to 168 (AAGDLPDADTAPADP) are enriched in low complexity. Over residues 170–179 (ESSSNQRVIR) the composition is skewed to polar residues.

It belongs to the bacterial ribosomal protein bL17 family. Part of the 50S ribosomal subunit. Contacts protein L32.

This chain is Large ribosomal subunit protein bL17, found in Tropheryma whipplei (strain TW08/27) (Whipple's bacillus).